A 94-amino-acid chain; its full sequence is Co-chaperonin GroES (94 aa).

This sequence belongs to the GroES chaperonin family. As to quaternary structure, heptamer of 7 subunits arranged in a ring. Interacts with the chaperonin GroEL.

It localises to the cytoplasm. Functionally, together with the chaperonin GroEL, plays an essential role in assisting protein folding. The GroEL-GroES system forms a nano-cage that allows encapsulation of the non-native substrate proteins and provides a physical environment optimized to promote and accelerate protein folding. GroES binds to the apical surface of the GroEL ring, thereby capping the opening of the GroEL channel. This chain is Co-chaperonin GroES, found in Leuconostoc citreum (strain KM20).